Here is a 727-residue protein sequence, read N- to C-terminus: NADH-ubiquinone oxidoreductase 75 kDa subunit, mitochondrial (727 aa).

A mitochondrion-targeting transit peptide spans 1 to 23 (MLRIPIKRALIGLSNSPKGYVRT). The region spanning 30-108 (NLIEVFVDGQ…GWNILTNSEK (79 aa)) is the 2Fe-2S ferredoxin-type domain. Cysteine 64, cysteine 75, and cysteine 78 together coordinate [2Fe-2S] cluster. An N6-acetyllysine modification is found at lysine 84. [2Fe-2S] cluster is bound at residue cysteine 92. Positions 108–147 (KSKKAREGVMEFLLANHPLDCPICDQGGECDLQDQSMMFG) constitute a 4Fe-4S His(Cys)3-ligated-type domain. Positions 124, 128, 131, 137, 176, 179, 182, and 226 each coordinate [4Fe-4S] cluster. The 4Fe-4S Mo/W bis-MGD-type domain occupies 245–301 (TRKTESIDVMDAVGSNIVVSTRTGEVMRILPRMHEDINEEWISDKTRFAYDGLKRQR). Residue serine 461 is modified to Phosphoserine. An N6-acetyllysine mark is found at lysine 467, lysine 499, and lysine 709.

This sequence belongs to the complex I 75 kDa subunit family. Core subunit of respiratory chain NADH dehydrogenase (Complex I) which is composed of 45 different subunits. This is the largest subunit of complex I and it is a component of the iron-sulfur (IP) fragment of the enzyme. Complex I associates with ubiquinol-cytochrome reductase complex (Complex III) to form supercomplexes. In astrocytes, less complex I is assembled into supercomplexes as compared to neurons. Interacts with MDM2. Interacts with AKAP1. [2Fe-2S] cluster serves as cofactor. Requires [4Fe-4S] cluster as cofactor. Post-translationally, acetylation of Lys-84 is observed in liver mitochondria from fasted mice but not from fed mice. As to expression, brain. More abundant in neurons than in astrocytes (at protein level).

It is found in the mitochondrion inner membrane. It carries out the reaction a ubiquinone + NADH + 5 H(+)(in) = a ubiquinol + NAD(+) + 4 H(+)(out). Its function is as follows. Core subunit of the mitochondrial membrane respiratory chain NADH dehydrogenase (Complex I) which catalyzes electron transfer from NADH through the respiratory chain, using ubiquinone as an electron acceptor. Essential for catalysing the entry and efficient transfer of electrons within complex I. Plays a key role in the assembly and stability of complex I and participates in the association of complex I with ubiquinol-cytochrome reductase complex (Complex III) to form supercomplexes. The polypeptide is NADH-ubiquinone oxidoreductase 75 kDa subunit, mitochondrial (Ndufs1) (Mus musculus (Mouse)).